The chain runs to 396 residues: S-adenosylmethionine synthase (396 aa).

Position 16 (histidine 16) interacts with ATP. Aspartate 18 contacts Mg(2+). K(+) is bound at residue glutamate 44. L-methionine is bound by residues glutamate 57 and glutamine 100. Positions 100 to 110 (QSVDIAQGVDR) are flexible loop. ATP is bound by residues 165-167 (DAK), aspartate 240, 246-247 (RK), alanine 263, and lysine 267. Aspartate 240 lines the L-methionine pocket. Lysine 271 serves as a coordination point for L-methionine.

This sequence belongs to the AdoMet synthase family. As to quaternary structure, homotetramer; dimer of dimers. The cofactor is Mg(2+). It depends on K(+) as a cofactor.

The protein resides in the cytoplasm. The enzyme catalyses L-methionine + ATP + H2O = S-adenosyl-L-methionine + phosphate + diphosphate. It functions in the pathway amino-acid biosynthesis; S-adenosyl-L-methionine biosynthesis; S-adenosyl-L-methionine from L-methionine: step 1/1. Functionally, catalyzes the formation of S-adenosylmethionine (AdoMet) from methionine and ATP. The overall synthetic reaction is composed of two sequential steps, AdoMet formation and the subsequent tripolyphosphate hydrolysis which occurs prior to release of AdoMet from the enzyme. The chain is S-adenosylmethionine synthase from Pseudomonas savastanoi pv. phaseolicola (strain 1448A / Race 6) (Pseudomonas syringae pv. phaseolicola (strain 1448A / Race 6)).